The following is a 279-amino-acid chain: Isopentenyl-diphosphate delta-isomerase idi1 (279 aa).

Position 78 (Lys-78) interacts with substrate. Residues His-82 and His-93 each contribute to the Mg(2+) site. The 159-residue stretch at 91–249 folds into the Nudix hydrolase domain; that stretch reads LLHRAFSVFL…GLKFTPWFKL (159 aa). Positions 111 and 116 each coordinate substrate. Cys-128 is a catalytic residue. Ser-129 is a substrate binding site. The Nudix box signature appears at 129 to 162; the sequence is SHPLGIPGETGAELDAAVLGVKRAAQRKLDQELG. Glu-191 and Glu-193 together coordinate Mg(2+). Residue Glu-193 is part of the active site.

This sequence belongs to the IPP isomerase type 1 family. It depends on Mg(2+) as a cofactor.

The enzyme catalyses isopentenyl diphosphate = dimethylallyl diphosphate. It participates in isoprenoid biosynthesis; dimethylallyl diphosphate biosynthesis; dimethylallyl diphosphate from isopentenyl diphosphate: step 1/1. In terms of biological role, isopentenyl-diphosphate delta-isomerase; part of the second module of ergosterol biosynthesis pathway that includes the middle steps of the pathway. Idi1 catalyzes the 1,3-allylic rearrangement of isopentenyl (IPP) to its highly electrophilic allylic isomer, dimethylallyl diphosphate (DMAPP). The second module is carried out in the vacuole and involves the formation of farnesyl diphosphate, which is also an important intermediate in the biosynthesis of ubiquinone, dolichol, heme and prenylated proteins. Activity by the mevalonate kinase erg12 (AFUA_4G07780) first converts mevalonate into 5-phosphomevalonate. 5-phosphomevalonate is then further converted to 5-diphosphomevalonate by the phosphomevalonate kinase erg8 (AFUA_5G10680). The diphosphomevalonate decarboxylase mvd1 (AFUA_4G07130) then produces isopentenyl diphosphate. The isopentenyl-diphosphate delta-isomerase idi1 (AFUA_6G11160) then catalyzes the 1,3-allylic rearrangement of the homoallylic substrate isopentenyl (IPP) to its highly electrophilic allylic isomer, dimethylallyl diphosphate (DMAPP). Finally the farnesyl diphosphate synthase erg20 (AFUA_5G02450) catalyzes the sequential condensation of isopentenyl pyrophosphate with dimethylallyl pyrophosphate, and then with the resultant geranylpyrophosphate to the ultimate product farnesyl pyrophosphate. This is Isopentenyl-diphosphate delta-isomerase idi1 from Aspergillus fumigatus (strain ATCC MYA-4609 / CBS 101355 / FGSC A1100 / Af293) (Neosartorya fumigata).